Reading from the N-terminus, the 131-residue chain is U-scoloptoxin-Er5e (131 aa).

A signal peptide spans 1–22 (MKTNCEFPLLCLLIVLVANVEG). A propeptide spanning residues 23–94 (EVEDNELKMV…KRLWRNWERR (72 aa)) is cleaved from the precursor. RLWRNWE repeat units lie at residues 34 to 40 (RLWRNWE), 61 to 67 (RLWRNWE), and 86 to 92 (RLWRNWE). The residue at position 95 (Q95) is a Pyrrolidone carboxylic acid. The RLWRNWE 4; approximate repeat unit spans residues 107–113 (ELWRNWE). The propeptide occupies 112 to 131 (WEDLKRRQVVDLNDEQKTTG).

It belongs to the scoloptoxin-08 family. As to expression, expressed by the venom gland.

It is found in the secreted. This Ethmostigmus rubripes (Giant centipede) protein is U-scoloptoxin-Er5e.